Here is a 358-residue protein sequence, read N- to C-terminus: Magnesium-protoporphyrin IX monomethyl ester [oxidative] cyclase (358 aa).

The protein belongs to the AcsF family. It depends on Fe cation as a cofactor.

It carries out the reaction Mg-protoporphyrin IX 13-monomethyl ester + 3 NADPH + 3 O2 + 2 H(+) = 3,8-divinyl protochlorophyllide a + 3 NADP(+) + 5 H2O. It functions in the pathway porphyrin-containing compound metabolism; chlorophyll biosynthesis (light-independent). In terms of biological role, catalyzes the formation of the isocyclic ring in chlorophyll biosynthesis. Mediates the cyclase reaction, which results in the formation of divinylprotochlorophyllide (Pchlide) characteristic of all chlorophylls from magnesium-protoporphyrin IX 13-monomethyl ester (MgPMME). The chain is Magnesium-protoporphyrin IX monomethyl ester [oxidative] cyclase from Synechococcus elongatus (strain ATCC 33912 / PCC 7942 / FACHB-805) (Anacystis nidulans R2).